Reading from the N-terminus, the 892-residue chain is Zinc finger protein 473 homolog (892 aa).

Residues 23–101 form the KRAB domain; that stretch reads ETLKDLAMDF…TKSSPLQSGF (79 aa). Polar residues-rich tracts occupy residues 66–76 and 84–97; these read DTSQPSLTSQP and ATST…SSPL. Disordered regions lie at residues 66–97 and 134–203; these read DTSQ…SSPL and GDPE…DSVQ. Composition is skewed to basic and acidic residues over residues 138 to 156 and 190 to 203; these read SLPR…HQSP and KESR…DSVQ. 2 consecutive C2H2-type zinc fingers follow at residues 209–231 and 265–287; these read YKCS…WVLH and YTCQ…QKIH. Polar residues predominate over residues 297–308; it reads SDSNLEGLSRSP. The segment at 297–370 is disordered; that stretch reads SDSNLEGLSR…HPKPLRHQKT (74 aa). Composition is skewed to basic and acidic residues over residues 313 to 323 and 332 to 353; these read GKQRLSKDTDS and QDQE…ESQP. 8 consecutive C2H2-type zinc fingers follow at residues 377–399, 404–426, 432–454, 460–482, 488–510, 516–538, 544–566, and 572–594; these read FRCK…QRAH, YKCA…RKSH, CECQ…QAIH, YKCD…QRIH, HKCS…QRVH, HQCP…RLRH, FGCA…NKIH, and YECK…LSIH. Residue lysine 476 forms a Glycyl lysine isopeptide (Lys-Gly) (interchain with G-Cter in SUMO2) linkage. Lysine 602 is covalently cross-linked (Glycyl lysine isopeptide (Lys-Gly) (interchain with G-Cter in SUMO2)). A C2H2-type 11; degenerate zinc finger spans residues 697–719; sequence FKCDIYNRAFKQRAHLSKHQLIH. 6 consecutive C2H2-type zinc fingers follow at residues 725–747, 753–775, 781–803, 809–831, 837–859, and 865–887; these read FKCN…QKTH, FECS…QKIH, FKCG…QRIH, YVCQ…LRIH, YTCG…ERIH, and YACG…QRIH.

The protein belongs to the krueppel C2H2-type zinc-finger protein family. In terms of assembly, interacts with the SLBP/pre-mRNA complex but not with SLBP alone. Interacts with LSM11 in a U7 snRNP-dependent manner.

It is found in the nucleus. Functionally, involved in histone 3'-end pre-mRNA processing by associating with U7 snRNP and interacting with SLBP/pre-mRNA complex. Increases histone 3'-end pre-mRNA processing but has no effect on U7 snRNP levels, when overexpressed. Required for cell cycle progression from G1 to S phases. The polypeptide is Zinc finger protein 473 homolog (Znf473) (Mus musculus (Mouse)).